Here is a 306-residue protein sequence, read N- to C-terminus: Small ribosomal subunit protein uS2 (306 aa).

Serine 2 carries the N-acetylserine modification. Laminin-binding regions lie at residues 161-180 (IPCN…MLAR) and 205-229 (RDPE…EFQG). [DE]-W-[ST] repeat units follow at residues 230–232 (EWT), 245–247 (DWS), 276–278 (DWS), 286–288 (DWS), and 304–306 (EWS). Residues 242–306 (EVADWSEGVQ…EWTGTTTEWS (65 aa)) are laminin-binding. Positions 247–306 (SEGVQVPSVPIQQFTAERTDVPPAPKPTEDWSTQPASTDDWSAAPTAQASEWTGTTTEWS) are disordered. Residues 276–306 (DWSTQPASTDDWSAAPTAQASEWTGTTTEWS) show a composition bias toward polar residues.

The protein belongs to the universal ribosomal protein uS2 family. As to quaternary structure, monomer (37LRP) and homodimer (67LR). Component of the small ribosomal subunit. Mature ribosomes consist of a small (40S) and a large (60S) subunit. The 40S subunit contains about 33 different proteins and 1 molecule of RNA (18S). The 60S subunit contains about 49 different proteins and 3 molecules of RNA (28S, 5.8S and 5S). Interacts with rps21. Interacts with several laminins including at least lamb1. Interacts with mdk. Acylated. Acylation may be a prerequisite for conversion of the monomeric 37 kDa laminin receptor precursor (37LRP) to the mature dimeric 67 kDa laminin receptor (67LR), and may provide a mechanism for membrane association. In terms of processing, cleaved by stromelysin-3 (ST3) at the cell surface. Cleavage by stromelysin-3 may be a mechanism to alter cell-extracellular matrix interactions.

It localises to the cell membrane. The protein resides in the cytoplasm. It is found in the nucleus. In terms of biological role, required for the assembly and/or stability of the 40S ribosomal subunit. Required for the processing of the 20S rRNA-precursor to mature 18S rRNA in a late step of the maturation of 40S ribosomal subunits. Also functions as a cell surface receptor for laminin. Plays a role in cell adhesion to the basement membrane and in the consequent activation of signaling transduction pathways. May play a role in cell fate determination and tissue morphogenesis. The polypeptide is Small ribosomal subunit protein uS2 (rpsa) (Xenopus laevis (African clawed frog)).